Here is a 209-residue protein sequence, read N- to C-terminus: Small ribosomal subunit protein uS4 (209 aa).

Residues 98-164 form the S4 RNA-binding domain; the sequence is RRLDNVVYRL…LPIKNAIELN (67 aa).

The protein belongs to the universal ribosomal protein uS4 family. Part of the 30S ribosomal subunit. Contacts protein S5. The interaction surface between S4 and S5 is involved in control of translational fidelity.

One of the primary rRNA binding proteins, it binds directly to 16S rRNA where it nucleates assembly of the body of the 30S subunit. Its function is as follows. With S5 and S12 plays an important role in translational accuracy. The chain is Small ribosomal subunit protein uS4 from Thermosipho melanesiensis (strain DSM 12029 / CIP 104789 / BI429).